The following is a 1479-amino-acid chain: Peroxidasin homolog (1479 aa).

An N-terminal signal peptide occupies residues 1 to 26 (MAKRSRGPGRRCLLALVLFCAWGTLA). In terms of domain architecture, LRRNT spans 27-63 (VVAQKPGAGCPSRCLCFRTTVRCMHLLLEAVPAVAPQ). Cystine bridges form between C36-C42 and C40-C49. 6 LRR repeats span residues 61-84 (APQT…AFRR), 85-108 (LRNL…AFED), 110-132 (ENLK…AFKG), 133-156 (LASL…SFQH), 157-180 (LPKL…TFNH), and 182-204 (ESMK…LWLA). Residues 192–244 (NTLHCDCEILWLADLLKTYAESGNAQAAAICEYPRRIQGRSVATITPEELNCE) enclose the LRRCT domain. Disulfide bonds link C196–C243, C198–C222, C267–C317, C363–C412, C454–C502, and C546–C594. Ig-like C2-type domains are found at residues 246 to 332 (PRIT…QEVT), 342 to 428 (PTFV…AFII), 433 to 520 (PQFT…LTVQ), and 521 to 610 (PRVT…MVLS). Residues N640, N699, N719, and N731 are each glycosylated (N-linked (GlcNAc...) asparagine). 4 disulfide bridges follow: C723–C885, C732–C748, C847–C857, and C851–C875. D826 is a heme b binding site. H827 acts as the Proton acceptor in catalysis. Residue D828 participates in Ca(2+) binding. A glycan (N-linked (GlcNAc...) asparagine) is linked at N865. Positions 907, 909, 911, and 913 each coordinate Ca(2+). A disulfide bridge links C959 with C970. N-linked (GlcNAc...) asparagine glycosylation occurs at N964. Positions 980 and 1074 each coordinate heme b. An LRR 7 repeat occupies 1151–1175 (ALDLAAINIQRGRDHGIPPYHDYRV). The residue at position 1176 (Y1176) is a Phosphotyrosine. Intrachain disulfides connect C1177–C1234 and C1275–C1301. N-linked (GlcNAc...) asparagine glycosylation occurs at N1178. Position 1180 is a phosphoserine (S1180). An LRR 8 repeat occupies 1270–1291 (LARILCDNADNITRVQSDVFRV). 3 N-linked (GlcNAc...) asparagine glycosylation sites follow: N1280, N1368, and N1425. The tract at residues 1315–1411 (CCEDCRTRGQ…QIKKLESRLS (97 aa)) is required in homotrimerization. A disordered region spans residues 1342 to 1380 (YQEDKPTKKTRPRKIPSVGRQGEHLSNSTSAFSTRSDAS). The span at 1365 to 1380 (HLSNSTSAFSTRSDAS) shows a compositional bias: polar residues. The VWFC domain occupies 1413–1471 (TECVDAGGESHANNTKWKKDACTICECKDGQVTCFVEACPPATCAVPVNIPGACCPVCL).

It belongs to the peroxidase family. XPO subfamily. In terms of assembly, homotrimer; disulfide-linked. The homotrimer form is predominant. Homooligomer; disulfide-linked. Oligomerization occurs intracellularly before C-terminal proteolytic cleavage. Interacts with PXDNL; this interaction inhibits the peroxidase activity of PXDN. The cofactor is Ca(2+). Heme b is required as a cofactor. Glycosylated. Four sites are completely N-glycosylated (Asn-640, Asn-731, Asn-865 and Asn-1425), whereas the others are found partially glycosylated. Post-translationally, processed by FURIN and the proteolytic processing largely depends on the peroxidase activity of PXDN. The proteolytic cleavage occurs after intracellular homotrimerization and releases into the extracellular matrix a large, catalytically active fragment and a smaller fragment consisting primarily of the C-terminal VWFC domain. The processing enhances both peroxidase activity and sulfilimine cross-links formation. In terms of tissue distribution, expressed at higher levels in heart, lung, ovary, spleen, intestine and placenta, and at lower levels in liver, colon, pancreas, kidney, thymus, skeletal muscle and prostate. Expressed in tumors such as melanoma, breast cancer, ovarian cancer and glioblastoma. A shorter form probably lacking the signal sequence is found in testis and in EB1 cells undergoing p53/TP53-dependent apoptosis.

Its subcellular location is the secreted. It localises to the extracellular space. The protein resides in the extracellular matrix. It is found in the endoplasmic reticulum. The protein localises to the cell surface. Its subcellular location is the basement membrane. The catalysed reaction is L-lysyl-[collagen] + L-methionyl-[collagen] + H2O2 = [collagen]-L-lysyl-N-S-L-methionyl-[collagen] + 2 H2O + H(+). The enzyme catalyses bromide + H2O2 = hypobromite + H2O. It catalyses the reaction L-lysyl-[collagen] + L-methionyl-[collagen] + hypobromite = [collagen]-L-lysyl-N-S-L-methionyl-[collagen] + bromide + H2O + H(+). It carries out the reaction L-tyrosyl-[protein] + bromide + H2O2 + H(+) = 3-bromo-L-tyrosyl-[protein] + 2 H2O. The catalysed reaction is hypobromite + L-tyrosyl-[protein] + H(+) = 3-bromo-L-tyrosyl-[protein] + H2O. The hypobromous acid formation is activated by increasing nitrite concentrations and inhibited by increasing urate concentrations. Its function is as follows. Catalyzes the two-electron oxidation of bromide by hydrogen peroxide and generates hypobromite as a reactive intermediate which mediates the formation of sulfilimine cross-links between methionine and hydroxylysine residues within an uncross-linked collagen IV/COL4A1 NC1 hexamer. In turns, directly contributes to the collagen IV network-dependent fibronectin/FN and laminin assembly, which is required for full extracellular matrix (ECM)-mediated signaling. Thus, sulfilimine cross-links are essential for growth factor-induced cell proliferation and survival in endothelial cells, an event essential to basement membrane integrity. In addition, through the bromide oxidation, may promote tubulogenesis and induce angiogenesis through ERK1/2, Akt, and FAK pathways. Moreover brominates alpha2 collagen IV chain/COL4A2 at 'Tyr-1485' and leads to bromine enrichment of the basement membranes. In vitro, can also catalyze the two-electron oxidation of thiocyanate and iodide and these two substrates could effectively compete with bromide and thus inhibit the formation of sulfilimine bonds. Binds laminins. May play a role in the organization of eyeball structure and lens development during eye development. This is Peroxidasin homolog from Homo sapiens (Human).